Here is a 359-residue protein sequence, read N- to C-terminus: Prostaglandin D2 receptor (359 aa).

Topologically, residues 1 to 21 are extracellular; it reads MKSPFYRCQNTTSVEKGNSAV. The N-linked (GlcNAc...) asparagine glycan is linked to Asn10. The chain crosses the membrane as a helical span at residues 22-42; the sequence is MGGVLFSTGLLGNLLALGLLA. The Cytoplasmic segment spans residues 43–59; it reads RSGLGWCSRRPLRPLPS. Residues 60–80 form a helical membrane-spanning segment; it reads VFYMLVCGLTVTDLLGKCLLS. The Extracellular segment spans residues 81-107; that stretch reads PVVLAAYAQNRSLRVLAPALDNSLCQA. Asn90 carries N-linked (GlcNAc...) asparagine glycosylation. Cysteines 105 and 183 form a disulfide. The helical transmembrane segment at 108-128 threads the bilayer; it reads FAFFMSFFGLSSTLQLLAMAL. The Cytoplasmic segment spans residues 129 to 150; the sequence is ECWLSLGHPFFYRRHITLRLGA. A helical membrane pass occupies residues 151-171; it reads LVAPVVSAFSLAFCALPFMGF. The Extracellular portion of the chain corresponds to 172-195; it reads GKFVQYCPGTWCFIQMVHEEGSLS. The chain crosses the membrane as a helical span at residues 196 to 216; the sequence is VLGYSVLYSSLMALLVLATVL. Topologically, residues 217 to 262 are cytoplasmic; the sequence is CNLGAMRNLYAMHRRLQRHPRSCTRDCAEPRADGREASPQPLEELD. Residues 263–283 traverse the membrane as a helical segment; the sequence is HLLLLALMTVLFTMCSLPVIY. The Extracellular portion of the chain corresponds to 284–310; that stretch reads RAYYGAFKDVKEKNRTSEEAEDLRALR. A glycan (N-linked (GlcNAc...) asparagine) is linked at Asn297. Residues 311–331 form a helical membrane-spanning segment; sequence FLSVISIVDPWIFIIFRSPVF. The Cytoplasmic segment spans residues 332 to 359; sequence RIFFHKIFIRPLRYRSRCSNSTNMESSL.

The protein belongs to the G-protein coupled receptor 1 family. As to expression, expressed in retinal choroid, ciliary epithelium, longitudinal and circular ciliary muscles, iris, small intestine and platelet membranes.

The protein resides in the cell membrane. Receptor for prostaglandin D2 (PGD2). The activity of this receptor is mainly mediated by G(s) proteins that stimulate adenylate cyclase, resulting in an elevation of intracellular cAMP. A mobilization of calcium is also observed, but without formation of inositol 1,4,5-trisphosphate. Involved in PLA2G3-dependent maturation of mast cells. PLA2G3 is secreted by immature mast cells and acts on nearby fibroblasts upstream to PTDGS to synthesize PGD2, which in turn promotes mast cell maturation and degranulation via PTGDR. The sequence is that of Prostaglandin D2 receptor (PTGDR) from Homo sapiens (Human).